A 486-amino-acid chain; its full sequence is Membrane-bound lytic murein transglycosylase F (486 aa).

A signal peptide spans 1 to 21 (MKRLKINYILIGVVTLLLALA). The interval 22–268 (LWPNITWRGG…RLEEKYLGHV (247 aa)) is non-LT domain. The tract at residues 269 to 486 (GSFDYVDTKT…AVTPELALNF (218 aa)) is LT domain. The active site involves glutamate 313.

In the N-terminal section; belongs to the bacterial solute-binding protein 3 family. This sequence in the C-terminal section; belongs to the transglycosylase Slt family.

The protein localises to the cell outer membrane. It catalyses the reaction Exolytic cleavage of the (1-&gt;4)-beta-glycosidic linkage between N-acetylmuramic acid (MurNAc) and N-acetylglucosamine (GlcNAc) residues in peptidoglycan, from either the reducing or the non-reducing ends of the peptidoglycan chains, with concomitant formation of a 1,6-anhydrobond in the MurNAc residue.. In terms of biological role, murein-degrading enzyme that degrades murein glycan strands and insoluble, high-molecular weight murein sacculi, with the concomitant formation of a 1,6-anhydromuramoyl product. Lytic transglycosylases (LTs) play an integral role in the metabolism of the peptidoglycan (PG) sacculus. Their lytic action creates space within the PG sacculus to allow for its expansion as well as for the insertion of various structures such as secretion systems and flagella. This chain is Membrane-bound lytic murein transglycosylase F, found in Serratia proteamaculans (strain 568).